We begin with the raw amino-acid sequence, 219 residues long: MDRFLYYPLSLMPYLVITLIVSFTMHELAHAYVAYKFGDDTAKKQGRLTLNPIKHLDPFGTILILVAGFGWARPIPVNRRFFKKPRLAGVLVSIAGPVSNLILAFIGFFLLVLMHAYGMEMLAAFSTGLDQFFSIWIQLNLVLFLFNLLPLPPLDGYRIIEDLVPPGVRAKMTQAESYGFIVFLVLFVTPLGSYVLWPMLNAGRDSILKLFSAIFQPLL.

Residues 4-24 (FLYYPLSLMPYLVITLIVSFT) traverse the membrane as a helical segment. A Zn(2+)-binding site is contributed by H26. Residue E27 is part of the active site. H30 is a binding site for Zn(2+). Transmembrane regions (helical) follow at residues 52–72 (PIKH…FGWA), 94–114 (IAGP…LVLM), 132–152 (FFSI…LPLP), and 180–200 (FIVF…WPML).

It belongs to the peptidase M50B family. Zn(2+) is required as a cofactor.

It localises to the cell membrane. The sequence is that of Putative zinc metalloprotease YwhC (ywhC) from Bacillus subtilis (strain 168).